The primary structure comprises 299 residues: Oxygen-dependent coproporphyrinogen-III oxidase (299 aa).

Ser92 is a binding site for substrate. His96 and His106 together coordinate Mn(2+). His106 serves as the catalytic Proton donor. 108–110 (NVR) provides a ligand contact to substrate. 2 residues coordinate Mn(2+): His145 and His175. Positions 240 to 275 (YVEFNLVWDRGTLFGLQTGGRTESILMSMPPLVRWE) are important for dimerization. Residue 258-260 (GGR) coordinates substrate.

It belongs to the aerobic coproporphyrinogen-III oxidase family. As to quaternary structure, homodimer. The cofactor is Mn(2+).

Its subcellular location is the cytoplasm. It carries out the reaction coproporphyrinogen III + O2 + 2 H(+) = protoporphyrinogen IX + 2 CO2 + 2 H2O. It participates in porphyrin-containing compound metabolism; protoporphyrin-IX biosynthesis; protoporphyrinogen-IX from coproporphyrinogen-III (O2 route): step 1/1. Functionally, involved in the heme biosynthesis. Catalyzes the aerobic oxidative decarboxylation of propionate groups of rings A and B of coproporphyrinogen-III to yield the vinyl groups in protoporphyrinogen-IX. This is Oxygen-dependent coproporphyrinogen-III oxidase from Escherichia coli O157:H7.